Consider the following 493-residue polypeptide: Xaa-Pro dipeptidase (493 aa).

N-acetylalanine is present on alanine 2. Serine 167 is subject to Phosphoserine. Histidine 255 lines the a dipeptide pocket. Mn(2+)-binding residues include aspartate 276, aspartate 287, and histidine 370. A dipeptide is bound at residue aspartate 287. Residues histidine 377 and arginine 398 each coordinate a dipeptide. 2 residues coordinate Mn(2+): glutamate 412 and glutamate 452.

This sequence belongs to the peptidase M24B family. Eukaryotic-type prolidase subfamily. In terms of assembly, homodimer. Mn(2+) serves as cofactor.

The catalysed reaction is Xaa-L-Pro dipeptide + H2O = an L-alpha-amino acid + L-proline. In terms of biological role, dipeptidase that catalyzes the hydrolysis of dipeptides with a prolyl (Xaa-Pro) or hydroxyprolyl residue in the C-terminal position. The preferred dipeptide substrate is Gly-Pro, but other Xaa-Pro dipeptides, such as Ala-Pro, Met-Pro, Phe-Pro, Val-Pro and Leu-Pro, can be cleaved. Plays an important role in collagen metabolism because the high level of iminoacids in collagen. The sequence is that of Xaa-Pro dipeptidase (PEPD) from Pongo abelii (Sumatran orangutan).